A 61-amino-acid chain; its full sequence is Large ribosomal subunit protein bL28 (61 aa).

Positions 1 to 26 are disordered; it reads MAKDFINGKRTQFGNKRSHALNSSRR. A compositionally biased stretch (polar residues) spans 9 to 25; it reads KRTQFGNKRSHALNSSR.

This sequence belongs to the bacterial ribosomal protein bL28 family.

The polypeptide is Large ribosomal subunit protein bL28 (Limosilactobacillus reuteri (strain DSM 20016) (Lactobacillus reuteri)).